The primary structure comprises 1117 residues: MENRPRQQTSGHDCSLGTGDDLSSRPGRVDLLRAHISPTTVKQVSVNHERKVVGSSSSRSAVWGISPDGSNAFESKNFGLEGDSNHTVEHEVIKEEDSQKKSPFSCGSAPRVVDSPGASVVSREGRVGPPSDGSAVVSGDDETDANNSEDGTEDEIVSEEGRRTEDEGDVTSRSDQVPCTPPPMWVPEVLSDESEETPLRRVGEERHVSDSSSGGDGYLRGTRQGRVRPHAVPPLFHTPSHFTPVRATSSRLISLSSDSERMHRMAQKVQTQPEMKPKELDKEAERKQEQLRSSKGDNKGIFKGLLRQLTRGYTGVAHLFDGLASDFKPHTENEGSSSNDVLTEERTVQPSSAVVSDKRVTGNGTGVERFKPRVRHRLSQECRPSFPEKPDEETSLSTTLPTKLKSLFSFASSHWNHASPGEGEATEAAGASVSGSSSFLAANANHSPSMLDAYGRPPQKRTQRRSFFGSVAAAASNAFAEAGAVAAAAAEAVAAVGQSSSDSSGDSSSESDHSGRERSRAFRGKRGGSNEITTMRSQRSAGHLSFSREPERESDQGEMTPTGETSGSESELDQVILTEHATPFNFVLWATREAAASLQRPLLSGPPEEEAGNAEELRSTENAIHRRELQRLGRLRAVALRLLLLICEDDSWCQDGTTRQSAHKGANDGARRRFPPIVQGVRGRRRSDRDTESPPTEATQDSEEVDRLWSQWINGSPETEGGEDADRKQEEKRLQGRGVSRSRYMWKAANRMLSVDRRLRKLHSDTAVRRMGETEFWKLYFYQVFLLMNRFDRQAHKVLRSLSCSFTLTTGEGGDENQPQEVAHDVLSQTSGFTESDTSSPSPSYGFASSPCTSARLIIPPTGLPDNTEEGEPLSFGGVSLEPKDEEAPEQVRQDGLGALAYAIFSSSRSPSLSSSSSGTTSVSARGTGSSFSRDVGESPLLVPRDSHRSGVGSETYSAGGDSPALREKVISENAGCLPLGRAPSQPTNTVSSVSSNRAYLEPASRRGSFSVVPVSGRRLRDALFAKRVSSSSQVNGRVSTSRGTMGEDRHQDQQGDNRLEGPSHLSAHNSLYQLGSRSGNCVQIKVKELKELDGTCGDTHQPGLACKGKEVQGARA.

Polar residues predominate over residues 1-12; that stretch reads MENRPRQQTSGH. 8 disordered regions span residues 1–27, 47–243, 258–301, 325–398, 415–442, 490–572, 600–619, and 654–736; these read MENRPRQQTSGHDCSLGTGDDLSSRPG, NHER…SHFT, DSER…NKGI, SDFK…SLST, WNHASPGEGEATEAAGASVSGSSSFLAA, AEAV…ESEL, RPLLSGPPEEEAGNAEELRS, and QDGT…RLQG. 3 stretches are compositionally biased toward basic and acidic residues: residues 83–100, 197–209, and 275–300; these read DSNHTVEHEVIKEEDSQK, TPLRRVGEERHVS, and MKPKELDKEAERKQEQLRSSKGDNKG. Low complexity-rich tracts occupy residues 418–442 and 490–508; these read ASPGEGEATEAAGASVSGSSSFLAA and AEAVAAVGQSSSDSSGDSS. The span at 510–520 shows a compositional bias: basic and acidic residues; sequence ESDHSGRERSR. The span at 530 to 540 shows a compositional bias: polar residues; that stretch reads NEITTMRSQRS. Positions 546-555 are enriched in basic and acidic residues; it reads FSREPERESD. The span at 557-569 shows a compositional bias: polar residues; it reads GEMTPTGETSGSE. A compositionally biased stretch (basic and acidic residues) spans 724-734; sequence DADRKQEEKRL. Residues 752–788 enclose the BSD domain; sequence MLSVDRRLRKLHSDTAVRRMGETEFWKLYFYQVFLLM. A compositionally biased stretch (polar residues) spans 829 to 838; it reads QTSGFTESDT. Disordered regions lie at residues 829–848, 858–891, 909–964, 1031–1066, and 1095–1117; these read QTSGFTESDTSSPSPSYGFA, IIPPTGLPDNTEEGEPLSFGGVSLEPKDEEAPEQ, RSPS…GDSP, SSSQVNGRVSTSRGTMGEDRHQDQQGDNRLEGPSHL, and GTCGDTHQPGLACKGKEVQGARA. A compositionally biased stretch (low complexity) spans 839–848; sequence SSPSPSYGFA. The span at 909–931 shows a compositional bias: low complexity; that stretch reads RSPSLSSSSSGTTSVSARGTGSS. Residues 1031-1044 show a composition bias toward polar residues; sequence SSSQVNGRVSTSRG. 2 stretches are compositionally biased toward basic and acidic residues: residues 1046–1062 and 1108–1117; these read MGEDRHQDQQGDNRLEG and KGKEVQGARA.

As to quaternary structure, interacts with RASP2.

The protein localises to the cytoplasmic vesicle. It localises to the secretory vesicle. Its subcellular location is the rhoptry membrane. In Toxoplasma gondii (strain ATCC 50853 / GT1), this protein is Rhoptry apical surface protein 3.